Reading from the N-terminus, the 274-residue chain is Large ribosomal subunit protein uL2cz/uL2cy (274 aa).

Disordered regions lie at residues 1-33 and 223-265; these read MAIH…LIYG and MNPV…KYND.

The protein belongs to the universal ribosomal protein uL2 family. Part of the 50S ribosomal subunit.

The protein resides in the plastid. The protein localises to the chloroplast. The protein is Large ribosomal subunit protein uL2cz/uL2cy (rpl2-A) of Pelargonium hortorum (Common geranium).